Consider the following 920-residue polypeptide: MIGRLFRAHGEFCASHPWEVIVALLTITACMLTVDKNNTLDASSGLGTATASAAAAGGSGSGAGSGASGTIPPSSMGGSATSSRHRPCHGWSQSCDGLEAEYNAADVILMTIVRCTAVLYCYYQFCSLHRLGSKYVLGIAGLFTVFSSFIFTTAIIKFLGSDISELKDALFFLLLVIDLSNSGRLAQLALSGSNQAEVTQNIARGLELLGPAISLDTIVEVLLVGVGTLSGVQRLEVLCMFAVLSVLVNYVVFMTFYPACLSLIFDLSRSGVDMSVVREKAKGSLLLKSLTEEEQKANPVLQRVKLIMTTGLMAVHIYSRVAFSGSDYDAVDKTLTPTLSLNVSNNRTESGEIADIIIKWLTMSADHIVISIVLIALVVKFICFDNRDPLPDQLRQSGPVAIAAKASQTTPIDEEHVEQEKDTENSAAVRTLLFTIEDQSSANASTQTDLLPLRHRLVGPIKPPRPVQECLDILNSTEEGSGPAALSDEEIVSIVHAGGTHCPLHKIESVLDDPERGVRIRRQIIGSRAKMPVGRLDVLPYEHFDYRKVLNACCENVLGYVPIPVGYAGPLLLDGETYYVPMATTEGALVASTNRGCKALSVRGVRSVVEDVGMTRAPCVRFPSVARAAEAKSWIENDENYRVVKTEFDSTSRFGRLKDCHIAMDGPQLYIRFVAITGDAMGMNMVSKGAEMALRRIQLQFPDMQIISLSGNFCCDKKPAAINWIKGRGKRVVTECTISAATLRSVLKTDAKTLVECNKLKNMGGSAMAGSIGGNNAHAANMVTAVFLATGQDPAQNVTSSNCSTAMECWAENSEDLYMTCTMPSLEVGTVGGGTGLPGQSACLEMLGVRGAHATRPGDNAKKLAQIVCATVMAGELSLMAALVNSDLVKSHMRHNRSSIAVNSANNPLNVTVSSCSTIS.

A helical membrane pass occupies residues 12–32 (FCASHPWEVIVALLTITACML). An N-linked (GlcNAc...) asparagine glycan is attached at N37. A disordered region spans residues 62–85 (GAGSGASGTIPPSSMGGSATSSRH). Polar residues predominate over residues 71–82 (IPPSSMGGSATS). Positions 106–263 (DVILMTIVRC…MTFYPACLSL (158 aa)) constitute an SSD domain. A run of 5 helical transmembrane segments spans residues 107–129 (VILM…CSLH), 136–156 (VLGI…TAII), 170–190 (LFFL…QLAL), 208–228 (LLGP…GVGT), and 237–257 (VLCM…MTFY). Residues N342 and N346 are each glycosylated (N-linked (GlcNAc...) asparagine). A helical membrane pass occupies residues 364–384 (SADHIVISIVLIALVVKFICF). The tract at residues 385–498 (DNRDPLPDQL…EEIVSIVHAG (114 aa)) is linker. N443 and N475 each carry an N-linked (GlcNAc...) asparagine glycan. The tract at residues 499–829 (GTHCPLHKIE…TCTMPSLEVG (331 aa)) is catalytic. Active-site charge relay system residues include E586, K717, and D793. N797 and N802 each carry an N-linked (GlcNAc...) asparagine glycan. H892 serves as the catalytic Proton donor. 2 N-linked (GlcNAc...) asparagine glycosylation sites follow: N896 and N910.

Belongs to the HMG-CoA reductase family. Highly expressed in embryonic gonadal mesoderm, where expression is initially broad, and then becomes restricted to a segmental pattern at stage 11. Expression is then further restricted to a cluster of cells in each of parasegments 10, 11 and 12, corresponding to the developing gonadal mesoderm. Not expressed in pole cells.

The protein resides in the endoplasmic reticulum membrane. The enzyme catalyses (R)-mevalonate + 2 NADP(+) + CoA = (3S)-3-hydroxy-3-methylglutaryl-CoA + 2 NADPH + 2 H(+). It functions in the pathway metabolic intermediate biosynthesis; (R)-mevalonate biosynthesis; (R)-mevalonate from acetyl-CoA: step 3/3. Its activity is regulated as follows. The activity of HMG-CoA-reductase is suppressed by exogenous mevalonate. Synthesis of mevalonate for the production of non-sterol isoprenoids, which are essential for growth differentiation. Provides spatial information during embryogenesis to guide migrating primordial germ cells (the pole cells) from the ectoderm to the mesoderm. Also required for association of the pole cells with the gonadal mesoderm. The chain is 3-hydroxy-3-methylglutaryl-coenzyme A reductase (Hmgcr) from Drosophila melanogaster (Fruit fly).